Consider the following 473-residue polypeptide: MATATEQWVLVEMVQALYEAPAYHLILEGILILWIIRLLFSKTYKLQERSDLTVKEKEELIEEWQPEPLVPLVPKDHPALNYNIVSGPPSHKIVVNGKECINFASFNFLGLLDNPRVKAAALASLKKYGVGTCGPRGFYGTFDVHLDLEDRLAKFMKTEEAIIYSYGFATIASAIPAYSKRGDIVFVDRAACFAIQKGLQASRSDIKLFKHNDMADLERLLKEQEIEDQKNPRKARVTRRFIVVEGLYMNTGTICPLPELVKLKYKYKARIFLEESLSFGVLGEHGRGVTEHYGINIDDIDLISANMENALASIGGFCCGRSFVIDHQRLSGQGYCFSASLPPLLAAAAIEALNIMEENPGIFAVLKEKCRQIHKALQGISGLKVVGEPLSPAFHLQLEESTGSREQDVRLLQEIVDQCMNRSIALTQARYLEKEEKCLPPPSIRVVVTVEQTEEELDRAASTIKEVAQAVLL.

An interaction with SPTLC2 region spans residues 1 to 66 (MATATEQWVL…KEELIEEWQP (66 aa)). Residues 16–36 (ALYEAPAYHLILEGILILWII) traverse the membrane as a helical segment. Tyrosine 164 is subject to Phosphotyrosine; by ABL.

This sequence belongs to the class-II pyridoxal-phosphate-dependent aminotransferase family. As to quaternary structure, component of the serine palmitoyltransferase (SPT) complex, which is also composed of SPTLC2 or SPTLC3 and SPTSSA or SPTSSB. The heterodimer with SPTLC2 or SPTLC3 forms the catalytic core of the enzyme, while SPTSSA or SPTSSB subunits determine substrate specificity. SPT also interacts with ORMDL proteins, especially ORMDL3, which negatively regulate SPT activity in the presence of ceramides. Forms dimers of heterodimers with SPTLC2. Interacts with RTN4. Pyridoxal 5'-phosphate serves as cofactor. Post-translationally, phosphorylation at Tyr-164 inhibits activity and promotes cell survival.

The protein resides in the endoplasmic reticulum membrane. The enzyme catalyses L-serine + hexadecanoyl-CoA + H(+) = 3-oxosphinganine + CO2 + CoA. It carries out the reaction octadecanoyl-CoA + L-serine + H(+) = 3-oxoeicosasphinganine + CO2 + CoA. It catalyses the reaction tetradecanoyl-CoA + L-serine + H(+) = 3-oxohexadecasphinganine + CO2 + CoA. The catalysed reaction is dodecanoyl-CoA + L-serine + H(+) = 3-oxotetradecasphinganine + CO2 + CoA. It functions in the pathway lipid metabolism; sphingolipid metabolism. With respect to regulation, SPT complex catalytic activity is negatively regulated by ORMDL proteins, including ORMDL3, in the presence of ceramides. This mechanism allows to maintain ceramide levels at sufficient concentrations for the production of complex sphingolipids, but which prevents the accumulation of ceramides to levels that trigger apoptosis. Component of the serine palmitoyltransferase multisubunit enzyme (SPT) that catalyzes the initial and rate-limiting step in sphingolipid biosynthesis by condensing L-serine and activated acyl-CoA (most commonly palmitoyl-CoA) to form long-chain bases. The SPT complex is also composed of SPTLC2 or SPTLC3 and SPTSSA or SPTSSB. Within this complex, the heterodimer with SPTLC2 or SPTLC3 forms the catalytic core. The composition of the serine palmitoyltransferase (SPT) complex determines the substrate preference. The SPTLC1-SPTLC2-SPTSSA complex shows a strong preference for C16-CoA substrate, while the SPTLC1-SPTLC3-SPTSSA isozyme uses both C14-CoA and C16-CoA as substrates, with a slight preference for C14-CoA. The SPTLC1-SPTLC2-SPTSSB complex shows a strong preference for C18-CoA substrate, while the SPTLC1-SPTLC3-SPTSSB isozyme displays an ability to use a broader range of acyl-CoAs, without apparent preference. Required for adipocyte cell viability and metabolic homeostasis. This is Serine palmitoyltransferase 1 (SPTLC1) from Pongo abelii (Sumatran orangutan).